The chain runs to 255 residues: Phosphatidylcholine synthase (255 aa).

Topologically, residues 1 to 13 are cytoplasmic; that stretch reads MNPIKPPFTLNQY. The chain crosses the membrane as a helical span at residues 14-34; sequence FAAWFVHVFTASAACIGVFSL. At 35 to 42 the chain is on the periplasmic side; that stretch reads YKIYQHDY. A helical membrane pass occupies residues 43-63; the sequence is VFALWLMAITVFIDAVDGSLA. Residues 64 to 76 are Cytoplasmic-facing; sequence RLVHVKSVLPKID. Residues 77 to 97 form a helical membrane-spanning segment; the sequence is GALLDNIVDYLNYVITPCFFL. The Periplasmic segment spans residues 98-103; sequence LVKPGM. Residues 104–124 traverse the membrane as a helical segment; that stretch reads LPADYVVPITAAITITSAYQF. Topologically, residues 125–133 are cytoplasmic; it reads CQDDAKTPD. Residues 134–154 traverse the membrane as a helical segment; that stretch reads HFFKGFPCYWNITVFYMYIFN. Residue T155 is a topological domain, periplasmic. The helical transmembrane segment at 156-175 threads the bilayer; that stretch reads SMIVNTVLLSLFCVLIFIPV. Topologically, residues 176 to 190 are cytoplasmic; the sequence is KYVYPSRLDYLTESR. Residues 191–211 traverse the membrane as a helical segment; that stretch reads VLKILMHCCSALYGISSFCLL. The Periplasmic segment spans residues 212–217; the sequence is VNYPET. A helical transmembrane segment spans residues 218 to 238; the sequence is NKLWVSLSLGYVGMYLFLSFY. At 239–255 the chain is on the cytoplasmic side; that stretch reads RTYYPMFKAKITANNKD.

Belongs to the CDP-alcohol phosphatidyltransferase class-I family. Mn(2+) is required as a cofactor.

Its subcellular location is the cell inner membrane. It catalyses the reaction a CDP-1,2-diacyl-sn-glycerol + choline = a 1,2-diacyl-sn-glycero-3-phosphocholine + CMP + H(+). Condenses choline with CDP-diglyceride to produce phosphatidylcholine and CMP. Affects virulence of this bacterium when there is a complete loss of phosphatidylcholine formation due to absence of both the synthase (pcs) and the methylation (pmtA) pathways. Reduced virulence results from lowered yields of bacteria within host macrophages and because of loss of high multiplicity cytotoxicity. This Legionella pneumophila subsp. pneumophila (strain Philadelphia 1 / ATCC 33152 / DSM 7513) protein is Phosphatidylcholine synthase.